The following is a 509-amino-acid chain: tRNA-2-methylthio-N(6)-dimethylallyladenosine synthase (509 aa).

Positions 1–15 (MNEQQRLASQQANSS) are enriched in polar residues. Residues 1–25 (MNEQQRLASQQANSSTKKEEKDYSK) form a disordered region. Residues 16 to 25 (TKKEEKDYSK) are compositionally biased toward basic and acidic residues. An MTTase N-terminal domain is found at 66–184 (RKFYIRTYGC…LPYILKDAMF (119 aa)). Cys75, Cys111, Cys145, Cys221, Cys225, and Cys228 together coordinate [4Fe-4S] cluster. The 231-residue stretch at 207–437 (RRGDIKAWVN…NTLVNTLAIE (231 aa)) folds into the Radical SAM core domain. One can recognise a TRAM domain in the interval 440 to 503 (SRYKGQIVEV…TWSLNGELVE (64 aa)).

This sequence belongs to the methylthiotransferase family. MiaB subfamily. Monomer. [4Fe-4S] cluster serves as cofactor.

Its subcellular location is the cytoplasm. It catalyses the reaction N(6)-dimethylallyladenosine(37) in tRNA + (sulfur carrier)-SH + AH2 + 2 S-adenosyl-L-methionine = 2-methylsulfanyl-N(6)-dimethylallyladenosine(37) in tRNA + (sulfur carrier)-H + 5'-deoxyadenosine + L-methionine + A + S-adenosyl-L-homocysteine + 2 H(+). Catalyzes the methylthiolation of N6-(dimethylallyl)adenosine (i(6)A), leading to the formation of 2-methylthio-N6-(dimethylallyl)adenosine (ms(2)i(6)A) at position 37 in tRNAs that read codons beginning with uridine. The sequence is that of tRNA-2-methylthio-N(6)-dimethylallyladenosine synthase from Bacillus cereus (strain B4264).